Reading from the N-terminus, the 186-residue chain is Probable peptidoglycan L,D-endopeptidase MepK (186 aa).

Positions 1-30 (MNYVDQNKRKWLSLGGIALGISILPNSVLA) are cleaved as a signal peptide. Positions 134, 141, and 174 each coordinate Zn(2+).

It belongs to the peptidase M15 family. The cofactor is Zn(2+).

It functions in the pathway cell wall biogenesis; cell wall polysaccharide biosynthesis. L,D-endopeptidase that cleaves meso-diaminopimelic acid (mDAP)-mDAP cross-links in peptidoglycan. It works in conjunction with other elongation-specific D,D-endopeptidases to make space for efficient incorporation of nascent peptidoglycan strands into the sacculus and thus enable cell wall expansion. In Haemophilus influenzae (strain ATCC 51907 / DSM 11121 / KW20 / Rd), this protein is Probable peptidoglycan L,D-endopeptidase MepK.